The primary structure comprises 114 residues: Large ribosomal subunit protein bL19 (114 aa).

Belongs to the bacterial ribosomal protein bL19 family.

Its function is as follows. This protein is located at the 30S-50S ribosomal subunit interface and may play a role in the structure and function of the aminoacyl-tRNA binding site. The chain is Large ribosomal subunit protein bL19 from Bacillus cytotoxicus (strain DSM 22905 / CIP 110041 / 391-98 / NVH 391-98).